A 355-amino-acid chain; its full sequence is Acyl-CoA desaturase 1 (355 aa).

Residues 1-68 (MPAHMLQEIS…EGPPPKLEYV (68 aa)) lie on the Cytoplasmic side of the membrane. Over residues 9–20 (ISSSYTTTTTIT) the composition is skewed to low complexity. The interval 9–33 (ISSSYTTTTTITAPPSGNEREKVKT) is disordered. The chain crosses the membrane as a helical span at residues 69 to 89 (WRNIILMVLLHLGGLYGIILV). Residue Asn-71 participates in substrate binding. At 90–93 (PSCK) the chain is on the lumenal side. A helical membrane pass occupies residues 94-114 (LYTCLFGIFYYMTSALGITAG). Topologically, residues 115 to 213 (AHRLWSHRTY…EKLVMFQRRY (99 aa)) are cytoplasmic. Residues His-116 and His-121 each coordinate Fe cation. The short motif at 116–121 (HRLWSH) is the Histidine box-1 element. Substrate contacts are provided by Asn-144, Arg-151, and Asp-152. Residues His-153, His-156, and His-157 each coordinate Fe cation. Positions 153–157 (HRAHH) match the Histidine box-2 motif. Arg-184 and Lys-185 together coordinate substrate. Residues 214–233 (YKPGLLLMCFILPTLVPWYC) form a helical membrane-spanning segment. The Lumenal segment spans residues 234–237 (WGET). The helical transmembrane segment at 238–259 (FVNSLFVSTFLRYTLVLNATWL) threads the bilayer. Trp-258 provides a ligand contact to substrate. Residues 260 to 355 (VNSAAHLYGY…RTGDGSHKSS (96 aa)) are Cytoplasmic-facing. Positions 265, 294, 297, and 298 each coordinate Fe cation. The short motif at 294–298 (HNYHH) is the Histidine box-3 element.

This sequence belongs to the fatty acid desaturase type 1 family. Requires Fe(2+) as cofactor. In terms of tissue distribution, detected in liver (at protein level). Detected in skin and liver. Detected in sebaceous gland, but not in hair follicle. Detected in white and brown adipose tissue, eyelid, Harderian gland, and at lower levels in Meibomian gland, eyeball and adrenal gland. Highly expressed in liver, and detected at low levels in brain, heart, lung, stomach, skeletal muscle and kidney.

The protein resides in the endoplasmic reticulum membrane. The protein localises to the microsome membrane. The catalysed reaction is octadecanoyl-CoA + 2 Fe(II)-[cytochrome b5] + O2 + 2 H(+) = (9Z)-octadecenoyl-CoA + 2 Fe(III)-[cytochrome b5] + 2 H2O. Functionally, stearoyl-CoA desaturase that utilizes O(2) and electrons from reduced cytochrome b5 to introduce the first double bond into saturated fatty acyl-CoA substrates. Catalyzes the insertion of a cis double bond at the Delta-9 position into fatty acyl-CoA substrates including palmitoyl-CoA and stearoyl-CoA. Gives rise to a mixture of 16:1 and 18:1 unsaturated fatty acids. Plays an important role in lipid biosynthesis. Plays an important role in regulating the expression of genes that are involved in lipogenesis and in regulating mitochondrial fatty acid oxidation. Plays an important role in body energy homeostasis. Contributes to the biosynthesis of membrane phospholipids, cholesterol esters and triglycerides. Required for normal development of sebaceous glands. Required for the biosynthesis of normal levels of Delta-9 unsaturated fatty acids and 1-alkyl-2,3-diacylglycerol in the Harderian gland. Required for normal production of meibum, an oily material that prevents drying of the cornea. This Mus musculus (Mouse) protein is Acyl-CoA desaturase 1 (Scd1).